The primary structure comprises 568 residues: Urocanate hydratase (568 aa).

Residues 58–59 (GG), Gln-136, 182–184 (GMG), Glu-202, Arg-207, 248–249 (NA), 269–273 (QTSAH), 279–280 (YL), and Tyr-328 contribute to the NAD(+) site. The active site involves Cys-416. Gly-498 lines the NAD(+) pocket.

The protein belongs to the urocanase family. The cofactor is NAD(+).

It localises to the cytoplasm. The catalysed reaction is 4-imidazolone-5-propanoate = trans-urocanate + H2O. The protein operates within amino-acid degradation; L-histidine degradation into L-glutamate; N-formimidoyl-L-glutamate from L-histidine: step 2/3. In terms of biological role, catalyzes the conversion of urocanate to 4-imidazolone-5-propionate. The polypeptide is Urocanate hydratase (Photobacterium profundum (strain SS9)).